A 159-amino-acid polypeptide reads, in one-letter code: MQQAPVVLSTLDKLLNWGRSNSLWPLTYGLACCAIEMMATGGSRFDFDRFGTIFRASPRQSDVMIIAGTLTKKHAEFMRRLYDQMPEPKWVISMGSCANTGGMFNTYATVQGADRIIPVDIYLPGCAPRPETLQYALMVLQDKIRRSKAIKQDAPKRLV.

Residues Cys32, Cys33, Cys97, and Cys126 each contribute to the [4Fe-4S] cluster site.

This sequence belongs to the complex I 20 kDa subunit family. NDH-1 is composed of 14 different subunits. Subunits NuoB, C, D, E, F, and G constitute the peripheral sector of the complex. The cofactor is [4Fe-4S] cluster.

The protein resides in the cell inner membrane. It carries out the reaction a quinone + NADH + 5 H(+)(in) = a quinol + NAD(+) + 4 H(+)(out). In terms of biological role, NDH-1 shuttles electrons from NADH, via FMN and iron-sulfur (Fe-S) centers, to quinones in the respiratory chain. The immediate electron acceptor for the enzyme in this species is believed to be ubiquinone. Couples the redox reaction to proton translocation (for every two electrons transferred, four hydrogen ions are translocated across the cytoplasmic membrane), and thus conserves the redox energy in a proton gradient. This Helicobacter acinonychis (strain Sheeba) protein is NADH-quinone oxidoreductase subunit B.